Consider the following 907-residue polypeptide: Isoleucine--tRNA ligase (907 aa).

The short motif at 57-67 (PFANGKAHMGS) is the 'HIGH' region element. Glu-549 is an L-isoleucyl-5'-AMP binding site. Residues 590 to 594 (KLSKS) carry the 'KMSKS' region motif. ATP is bound at residue Lys-593. Residues Cys-867, Cys-870, Cys-889, and Cys-892 each coordinate Zn(2+).

This sequence belongs to the class-I aminoacyl-tRNA synthetase family. IleS type 1 subfamily. Monomer. It depends on Zn(2+) as a cofactor.

It localises to the cytoplasm. The enzyme catalyses tRNA(Ile) + L-isoleucine + ATP = L-isoleucyl-tRNA(Ile) + AMP + diphosphate. Catalyzes the attachment of isoleucine to tRNA(Ile). As IleRS can inadvertently accommodate and process structurally similar amino acids such as valine, to avoid such errors it has two additional distinct tRNA(Ile)-dependent editing activities. One activity is designated as 'pretransfer' editing and involves the hydrolysis of activated Val-AMP. The other activity is designated 'posttransfer' editing and involves deacylation of mischarged Val-tRNA(Ile). This chain is Isoleucine--tRNA ligase, found in Methylacidiphilum infernorum (isolate V4) (Methylokorus infernorum (strain V4)).